We begin with the raw amino-acid sequence, 277 residues long: Probable septum site-determining protein MinC (277 aa).

Positions 137-164 (ATTGNAPAEPAPAEPAAPAAAPQPPAVP) are disordered. Pro residues predominate over residues 145 to 164 (EPAPAEPAAPAAAPQPPAVP).

Belongs to the MinC family. As to quaternary structure, interacts with MinD and FtsZ.

In terms of biological role, cell division inhibitor that blocks the formation of polar Z ring septums. Rapidly oscillates between the poles of the cell to destabilize FtsZ filaments that have formed before they mature into polar Z rings. Prevents FtsZ polymerization. This chain is Probable septum site-determining protein MinC, found in Bordetella petrii (strain ATCC BAA-461 / DSM 12804 / CCUG 43448).